Consider the following 1410-residue polypeptide: MLICFIFILLIPESATCPAECVCVDRTVSCVGQQLTEVPQNIPNDTIRLDLQDNEITKIGPNDFSSLMNLKALQLMDNQIVTIHNQSFSSLVFLQKLRLSRNRIRHLPDNVFQNNLKLTHLDLSENDITVVSDAQLQGPEFLEVLNLDKNHIFCLENNVISSWVSLEVLTLNGNRLTTFEEPSNARFRQLDLFNNPWNCDCRLRWMRKWLEKAEGQNKTVCATPLNLQGSSIEILQDKFMTCSGNRKRRYKKTCETAEICPLPCTCTGTTVDCRDSGLTYVPTNLPPSTTEIRLEQNQISSIPSHSFKNLKNLTRLDLSKNIITEIQPKAFLGLHNLHTLVLYGNNITDLKSDTFEGLGSLQLLLLNANQLTCIRRGTFDHVPKLSMLSLYDNDIKSISEVTFQNLTSLSTLHLAKNPLICDCNLQWLAQINLQKNIETSGARCEQPKRLRKKKFATLPPNKFKCKGSESFVSMYADSCFIDSICPTQCDCYGTTVDCNKRGLNTIPTSIPRFATQLLLSGNNISTVDLNSNIHVLENLEVLDLSNNHITFINDKSFEKLSKLRELRLNDNKLHHFSSMVLDEQSNLEILDLSGNNIQCFSSIFFNKATRIREIKVIGNDLLCDCRILPLMSWLRSNSSHSIDIPPCQQFQYSDNESDKQRCAAFPEETCSDDSNLCPPKCSCLDRVVRCSNKNLTSFPSRIPFDTTELYLDANYINEIPAHDLNRLYSLTKLDLSHNRLISLENNTFSNLTRLSTLIISYNKLRCLQPLAFNGLNALRILSLHGNDISFLPQSAFSNLTSITHIAVGSNSLYCDCNMAWFSKWIKSKFIEAGIARCEYPNTVSNQLLLTAQPYQFTCDSKVPTKLATKCDLCLNSPCKNNAICETTSSRKYTCNCTPGFYGVHCENQIDACYGSPCLNNATCKVAQAGRFNCYCNKGFEGDYCEKNIDDCVNSKCENGGKCVDLINSYRCDCPMEYEGKHCEDKLEYCTKKLNPCENNGKCIPINGSYSCMCSPGFTGNNCETNIDDCKNVECQNGGSCVDGILSYDCLCRPGYAGQYCEIPPMMDMEYQKTDACQQSACGQGECVASQNSSDFTCKCHEGFSGPSCDRQMSVGFKNPGAYLALDPLASDGTITMTLRTTSKIGILLYYGDDHFVSAELYDGRVKLVYYIGNFPASHMYSSVKVNDGLPHRISIRTSERKCFLQIDKNPVQIVENSGKSDQLITKGKEMLYIGGLPIEKSQDAKRRFHVKNSESLKGCISSITINEVPINLQQALENVNTEQSCSATVNFCAGIDCGNGKCTNNALSPKGYMCQCDSHFSGEHCDEKRIKCDKQKFRRHHIENECRSVDRIKIAECNGYCGGEQNCCTAVKKKQRKVKMICKNGTTKISTVHIIRQCQCEPTKSVLSEK.

The first 16 residues, Met-1–Thr-16, serve as a signal peptide directing secretion. One can recognise an LRRNT 1 domain in the interval Cys-17 to Pro-43. LRR repeat units lie at residues Val-22–Ile-42, Pro-43–Ser-66, Leu-67–Ser-90, Leu-91–Asn-114, Leu-116–Gly-138, Glu-140–Ser-162, Trp-163–Arg-186, Thr-219–Cys-242, Pro-286–Asn-309, Leu-310–Gly-333, His-335–Gly-357, Leu-358–His-381, Pro-383–Asn-405, Thr-407–Gln-430, Ala-442–Cys-465, Cys-489–Ile-510, Pro-511–Val-535, Leu-536–Lys-559, Ser-561–Glu-583, and Ser-585–Lys-607. The region spanning Asn-195–Ser-243 is the LRRCT 1 domain. The 28-residue stretch at Ile-259–Pro-286 folds into the LRRNT 2 domain. One can recognise an LRRCT 2 domain in the interval Asn-417–Lys-466. Residues Ile-484–Pro-511 enclose the LRRNT 3 domain. In terms of domain architecture, LRRCT 3 spans Asn-619 to Ser-671. An LRRNT 4 domain is found at Cys-677–Pro-703. LRR repeat units lie at residues Cys-681–Pro-703, Phe-704–Arg-726, Leu-727–Asn-750, Thr-752–Gly-774, Leu-775–Asn-798, and Thr-800–Lys-823. In terms of domain architecture, LRRCT 4 spans Asn-810–Asp-859. EGF-like domains follow at residues Asp-871–Glu-906 and Gln-908–Glu-945. 18 cysteine pairs are disulfide-bonded: Cys-873–Cys-884, Cys-878–Cys-894, Cys-896–Cys-905, Cys-912–Cys-923, Cys-917–Cys-933, Cys-935–Cys-944, Cys-951–Cys-962, Cys-956–Cys-971, Cys-973–Cys-982, Cys-989–Cys-1002, Cys-996–Cys-1011, Cys-1013–Cys-1022, Cys-1029–Cys-1040, Cys-1034–Cys-1049, Cys-1051–Cys-1060, Cys-1076–Cys-1086, Cys-1081–Cys-1097, and Cys-1099–Cys-1108. The region spanning Asn-947 to Glu-983 is the EGF-like 1; calcium-binding domain. The EGF-like 3 domain maps to Lys-985–Glu-1023. The 37-residue stretch at Asn-1025 to Glu-1061 folds into the EGF-like 2; calcium-binding domain. Residues Lys-1072 to Asp-1109 enclose the EGF-like 4 domain. One can recognise a Laminin G-like domain in the interval Met-1112–Cys-1285. An LRR 27 repeat occupies Thr-1197 to Asp-1221. Disulfide bonds link Cys-1259-Cys-1285, Cys-1292-Cys-1302, Cys-1297-Cys-1314, Cys-1316-Cys-1325, Cys-1332-Cys-1368, Cys-1346-Cys-1382, Cys-1357-Cys-1398, and Cys-1361-Cys-1400. An EGF-like 5 domain is found at Thr-1288–Asp-1326. The CTCK domain maps to Cys-1332–Val-1406.

Interacts with eva-1.

Its subcellular location is the secreted. In terms of biological role, functions as a ligand for sax-3 receptor during larval development. Acts via the sax-3/Robo receptor to direct ventral axon guidance and guidance at the midline during embryonic development. This chain is Slit homolog 1 protein (slt-1), found in Caenorhabditis elegans.